Reading from the N-terminus, the 309-residue chain is Elongation factor Ts (309 aa).

The segment at 82-85 is involved in Mg(2+) ion dislocation from EF-Tu; that stretch reads TDFV.

This sequence belongs to the EF-Ts family.

It localises to the cytoplasm. Its function is as follows. Associates with the EF-Tu.GDP complex and induces the exchange of GDP to GTP. It remains bound to the aminoacyl-tRNA.EF-Tu.GTP complex up to the GTP hydrolysis stage on the ribosome. The protein is Elongation factor Ts of Rickettsia felis (strain ATCC VR-1525 / URRWXCal2) (Rickettsia azadi).